A 382-amino-acid chain; its full sequence is Quinolinate synthase (382 aa).

Histidine 63 and serine 84 together coordinate iminosuccinate. Residue cysteine 129 coordinates [4Fe-4S] cluster. Iminosuccinate-binding positions include 155–157 and serine 172; that span reads YAN. Cysteine 216 serves as a coordination point for [4Fe-4S] cluster. Residues 242-244 and threonine 259 contribute to the iminosuccinate site; that span reads HPE. Cysteine 313 serves as a coordination point for [4Fe-4S] cluster.

Belongs to the quinolinate synthase family. Type 1 subfamily. [4Fe-4S] cluster is required as a cofactor.

The protein resides in the cytoplasm. It carries out the reaction iminosuccinate + dihydroxyacetone phosphate = quinolinate + phosphate + 2 H2O + H(+). Its pathway is cofactor biosynthesis; NAD(+) biosynthesis; quinolinate from iminoaspartate: step 1/1. Catalyzes the condensation of iminoaspartate with dihydroxyacetone phosphate to form quinolinate. This chain is Quinolinate synthase, found in Ralstonia pickettii (strain 12J).